The primary structure comprises 409 residues: Dual-specificity RNA methyltransferase RlmN (409 aa).

The active-site Proton acceptor is E121. Residues 127–376 (EEGRGTLCIS…IRTPRGRDIL (250 aa)) form the Radical SAM core domain. The cysteines at positions 134 and 379 are disulfide-linked. The [4Fe-4S] cluster site is built by C141, C145, and C148. S-adenosyl-L-methionine-binding positions include 205–206 (GE), S237, 259–261 (SLH), and N336. C379 acts as the S-methylcysteine intermediate in catalysis.

This sequence belongs to the radical SAM superfamily. RlmN family. [4Fe-4S] cluster serves as cofactor.

Its subcellular location is the cytoplasm. It carries out the reaction adenosine(2503) in 23S rRNA + 2 reduced [2Fe-2S]-[ferredoxin] + 2 S-adenosyl-L-methionine = 2-methyladenosine(2503) in 23S rRNA + 5'-deoxyadenosine + L-methionine + 2 oxidized [2Fe-2S]-[ferredoxin] + S-adenosyl-L-homocysteine. The enzyme catalyses adenosine(37) in tRNA + 2 reduced [2Fe-2S]-[ferredoxin] + 2 S-adenosyl-L-methionine = 2-methyladenosine(37) in tRNA + 5'-deoxyadenosine + L-methionine + 2 oxidized [2Fe-2S]-[ferredoxin] + S-adenosyl-L-homocysteine. Functionally, specifically methylates position 2 of adenine 2503 in 23S rRNA and position 2 of adenine 37 in tRNAs. m2A2503 modification seems to play a crucial role in the proofreading step occurring at the peptidyl transferase center and thus would serve to optimize ribosomal fidelity. This chain is Dual-specificity RNA methyltransferase RlmN, found in Rhizobium etli (strain ATCC 51251 / DSM 11541 / JCM 21823 / NBRC 15573 / CFN 42).